A 353-amino-acid chain; its full sequence is Protein arginine N-methyltransferase 1 (353 aa).

The SAM-dependent MTase PRMT-type domain occupies 32-353 (KDYYFDSYAH…LSCSTDYRMR (322 aa)). S-adenosyl-L-methionine contacts are provided by His45, Arg54, Gly78, and Glu100. At Lys116 the chain carries N6-succinyllysine. Lys127 participates in a covalent cross-link: Glycyl lysine isopeptide (Lys-Gly) (interchain with G-Cter in ubiquitin). Glu129 lines the S-adenosyl-L-methionine pocket. Catalysis depends on residues Glu144 and Glu153. Residues Lys210 and Lys215 each carry the N6-acetyllysine modification. A phosphoserine mark is found at Ser286 and Ser289.

Belongs to the class I-like SAM-binding methyltransferase superfamily. Protein arginine N-methyltransferase family. In terms of assembly, homodimer and heterodimer with PRMT8. Homooctamer; individual homodimers associates to form a homooctamer. Interacts with NFATC2IP. Interacts with ILF3 and SUPT5H. Individual homodimers can associate to form a homohexamer. Interacts with FOXO1; the interaction methylates FOXO1, retaining it in the nucleus and increasing its transcriptional activity. Methylation of FOXO1 is increased with oxidative stress. Interacts with CHTOP; the interaction methylates CHTOP, enabling its interaction with the 5FMC complex. Interacts with BTG1, BTG2 and IFNAR1. Interacts with and probably methylates ATXN2L. Component of the methylosome, a 20S complex containing at least CLNS1A/pICln, PRMT5/SKB1, WDR77/MEP50, PRMT1 and ERH. Interacts with DHX9 (via RGG region). Interacts (via N-terminus) with HABP4. Interacts with MAP3K5/ASK1; the interaction results in MAP3K5 methylation by PRMT1 which inhibits MAP3K5 activation. Interacts with TRIM48; the interaction results in ubiquitination of PRMT1 by TRIM48, leading to PRMT1 proteasomal degradation and activation of MAP3K5. Interacts with GATOR1 complex; this interaction is S-adenosyl-L-methionine (SAM) dependent and is perturbated by SAMTOR in a SAM-sensitive manner. Interacts with GFI1; promoting recognition and binding of MRE11 and TP53BP1 substrates by PRMT1. Polyubiquitinated at Lys-127 by the SCF(FBXL17) complex, leading to its subsequent degradation. Ubiquitination is regulated by acetylation at Lys-210 and Lys-215. Polyubiquitinated by E3 ubiquitin-protein ligase TRIM48, leading to suppression of MAP3K5/ASK1 methylation and subsequent MAP3K5 activation. Post-translationally, acetylation at Lys-210 and Lys-215 regulates ubiquitination by the SCF(FBXL17) complex. Acetylated at Lys-215 by p300/EP300. Deacetylated at Lys-210 and Lys-215 by SIRT1. In terms of tissue distribution, ubiquitous.

The protein resides in the nucleus. Its subcellular location is the nucleoplasm. The protein localises to the cytoplasm. It is found in the cytosol. It localises to the lysosome membrane. The catalysed reaction is L-arginyl-[protein] + 2 S-adenosyl-L-methionine = N(omega),N(omega)-dimethyl-L-arginyl-[protein] + 2 S-adenosyl-L-homocysteine + 2 H(+). It carries out the reaction L-arginyl-[protein] + S-adenosyl-L-methionine = N(omega)-methyl-L-arginyl-[protein] + S-adenosyl-L-homocysteine + H(+). The enzyme catalyses N(omega)-methyl-L-arginyl-[protein] + S-adenosyl-L-methionine = N(omega),N(omega)-dimethyl-L-arginyl-[protein] + S-adenosyl-L-homocysteine + H(+). Its function is as follows. Arginine methyltransferase that methylates (mono and asymmetric dimethylation) the guanidino nitrogens of arginyl residues present in proteins such as ESR1, histone H2, H3 and H4, FMR1, ILF3, HNRNPA1, HNRNPD, NFATC2IP, SUPT5H, TAF15, EWS, HABP4, SERBP1, RBM15, FOXO1, CHTOP, MAP3K5/ASK1 and MICU1. Constitutes the main enzyme that mediates monomethylation and asymmetric dimethylation of histone H4 'Arg-3' (H4R3me1 and H4R3me2a, respectively), a specific tag for epigenetic transcriptional activation. May be involved in the regulation of TAF15 transcriptional activity, act as an activator of estrogen receptor (ER)-mediated transactivation, play a key role in neurite outgrowth and act as a negative regulator of megakaryocytic differentiation, by modulating p38 MAPK pathway. Methylates RBM15, promoting ubiquitination and degradation of RBM15. Methylates MRE11 and TP53BP1, promoting the DNA damage response. Methylates FOXO1 and retains it in the nucleus increasing its transcriptional activity. Methylates CHTOP and this methylation is critical for its 5-hydroxymethylcytosine (5hmC)-binding activity. Methylates MAP3K5/ASK1 at 'Arg-85' and 'Arg-87' which promotes association of MAP3K5 with thioredoxin and negatively regulates MAP3K5 association with TRAF2, inhibiting MAP3K5 stimulation and MAP3K5-induced activation of JNK. Methylates H4R3 in genes involved in glioblastomagenesis in a CHTOP- and/or TET1-dependent manner. Plays a role in regulating alternative splicing in the heart. Methylates NPRL2 at 'Arg-78' leading to inhibition of its GTPase activator activity and then the GATOR1 complex and consequently inducing timely mTORC1 activation under methionine-sufficient conditions. The chain is Protein arginine N-methyltransferase 1 from Rattus norvegicus (Rat).